Consider the following 159-residue polypeptide: MATTATRHQDSKLSEKAESILAGFKLNWMNLRDAETGKVLWQSTEDMADPKREHKAHVPKNLLKCRTVSREINFTSSVKIEKFRLEQRVYLKGTIIEEWYFDFGFVIPDSTNTWQNMIEAAPESQMFPPSVLSGNVVVETLFYDGDLLVSTSRVRLYYD.

This sequence belongs to the PDE6D/unc-119 family.

The sequence is that of Phosphodiesterase delta-like protein (pdl-1) from Caenorhabditis elegans.